A 149-amino-acid polypeptide reads, in one-letter code: Transcriptional repressor NrdR (149 aa).

A zinc finger lies at C3–C34. Residues P49 to E139 enclose the ATP-cone domain.

This sequence belongs to the NrdR family. Zn(2+) serves as cofactor.

Negatively regulates transcription of bacterial ribonucleotide reductase nrd genes and operons by binding to NrdR-boxes. The polypeptide is Transcriptional repressor NrdR (Paracidovorax citrulli (strain AAC00-1) (Acidovorax citrulli)).